The primary structure comprises 234 residues: 2-hydroxy-3-keto-5-methylthiopentenyl-1-phosphate phosphatase (234 aa).

Belongs to the HAD-like hydrolase superfamily. MtnX family.

It catalyses the reaction 2-hydroxy-5-methylsulfanyl-3-oxopent-1-enyl phosphate + H2O = 1,2-dihydroxy-5-(methylsulfanyl)pent-1-en-3-one + phosphate. Its pathway is amino-acid biosynthesis; L-methionine biosynthesis via salvage pathway; L-methionine from S-methyl-5-thio-alpha-D-ribose 1-phosphate: step 4/6. Its function is as follows. Dephosphorylates 2-hydroxy-3-keto-5-methylthiopentenyl-1-phosphate (HK-MTPenyl-1-P) yielding 1,2-dihydroxy-3-keto-5-methylthiopentene (DHK-MTPene). This Bacillus velezensis (strain DSM 23117 / BGSC 10A6 / LMG 26770 / FZB42) (Bacillus amyloliquefaciens subsp. plantarum) protein is 2-hydroxy-3-keto-5-methylthiopentenyl-1-phosphate phosphatase.